Consider the following 388-residue polypeptide: Ribonuclease D (388 aa).

One can recognise a 3'-5' exonuclease domain in the interval 7–173 (ITDSKTLAQF…QIFPKMLEEL (167 aa)). In terms of domain architecture, HRDC spans 212–293 (KADVLGRLKA…ASHAPLAKEE (82 aa)).

This sequence belongs to the RNase D family. A divalent metal cation is required as a cofactor.

Its subcellular location is the cytoplasm. It catalyses the reaction Exonucleolytic cleavage that removes extra residues from the 3'-terminus of tRNA to produce 5'-mononucleotides.. Exonuclease involved in the 3' processing of various precursor tRNAs. Initiates hydrolysis at the 3'-terminus of an RNA molecule and releases 5'-mononucleotides. This is Ribonuclease D from Sphingobium indicum (strain DSM 16413 / CCM 7287 / MTCC 6362 / UT26 / NBRC 101211 / UT26S) (Sphingobium japonicum).